A 259-amino-acid chain; its full sequence is UPF0246 protein MADE_1015435 (259 aa).

This sequence belongs to the UPF0246 family.

The sequence is that of UPF0246 protein MADE_1015435 from Alteromonas mediterranea (strain DSM 17117 / CIP 110805 / LMG 28347 / Deep ecotype).